A 570-amino-acid chain; its full sequence is Sulfite reductase [NADPH] hemoprotein beta-component (570 aa).

Residues Cys434, Cys440, Cys479, and Cys483 each contribute to the [4Fe-4S] cluster site. Position 483 (Cys483) interacts with siroheme.

Belongs to the nitrite and sulfite reductase 4Fe-4S domain family. In terms of assembly, alpha(8)-beta(8). The alpha component is a flavoprotein, the beta component is a hemoprotein. Requires siroheme as cofactor. It depends on [4Fe-4S] cluster as a cofactor.

The enzyme catalyses hydrogen sulfide + 3 NADP(+) + 3 H2O = sulfite + 3 NADPH + 4 H(+). Its pathway is sulfur metabolism; hydrogen sulfide biosynthesis; hydrogen sulfide from sulfite (NADPH route): step 1/1. Functionally, component of the sulfite reductase complex that catalyzes the 6-electron reduction of sulfite to sulfide. This is one of several activities required for the biosynthesis of L-cysteine from sulfate. This chain is Sulfite reductase [NADPH] hemoprotein beta-component (cysI), found in Escherichia coli (strain K12).